Reading from the N-terminus, the 500-residue chain is uncharacterized protein (500 aa).

A signal peptide spans 1 to 20 (MHSIIFKAAVALLGVSTAAG). Asn-43 is a glycosylation site (N-linked (GlcNAc...) asparagine). The 173-residue stretch at 60–232 (TALRPDCIIA…TAFTVKTHTQ (173 aa)) folds into the FAD-binding PCMH-type domain. At His-98 the chain carries Pros-8alpha-FAD histidine. Residues Asn-194, Asn-201, Asn-246, Asn-299, and Asn-414 are each glycosylated (N-linked (GlcNAc...) asparagine).

It belongs to the oxygen-dependent FAD-linked oxidoreductase family. Requires FAD as cofactor.

Its subcellular location is the secreted. This is an uncharacterized protein from Arthroderma benhamiae (strain ATCC MYA-4681 / CBS 112371) (Trichophyton mentagrophytes).